A 275-amino-acid chain; its full sequence is Probable ABC transporter permease protein PH1216 (275 aa).

6 consecutive transmembrane segments (helical) span residues 10–30 (LLYI…WSAI), 73–93 (IFTT…GFTI), 105–125 (LLAL…IPLV), 137–157 (ILGL…LLFT), 181–203 (IYTK…YQFT), and 241–261 (IQMA…IALG). The 193-residue stretch at 68–260 (ILNSLIFTTF…LPTLLIMIAL (193 aa)) folds into the ABC transmembrane type-1 domain.

Belongs to the binding-protein-dependent transport system permease family. MalFG subfamily.

Its subcellular location is the cell membrane. In terms of biological role, probably part of a binding-protein-dependent transport system PH1214/15/16. Probably responsible for the translocation of the substrate across the membrane. The polypeptide is Probable ABC transporter permease protein PH1216 (Pyrococcus horikoshii (strain ATCC 700860 / DSM 12428 / JCM 9974 / NBRC 100139 / OT-3)).